Reading from the N-terminus, the 188-residue chain is MPDSLRPLLRKPFGVLYTGIGSDAVKSLVKDLNNPTKLISVGDVTTFHLLDSNIIPDILIVDDRTKRAPASSQVVFGTKHKGFAEITVDNPPGVITEDLINVISDAIVSDKNVRIFVQGEEDLAALPAILMAPLNSVVLYGQPDEGVMLVRVTESLKAELKDLFDKILEKQDHKEQLLHNVRRKLNGY.

GTP is bound by residues aspartate 43, valine 44, aspartate 62, glutamate 121, and aspartate 144.

Belongs to the GTP-dependent DPCK family.

It catalyses the reaction 3'-dephospho-CoA + GTP = GDP + CoA + H(+). The protein operates within cofactor biosynthesis; coenzyme A biosynthesis. Catalyzes the GTP-dependent phosphorylation of the 3'-hydroxyl group of dephosphocoenzyme A to form coenzyme A (CoA). The sequence is that of GTP-dependent dephospho-CoA kinase from Methanococcoides burtonii (strain DSM 6242 / NBRC 107633 / OCM 468 / ACE-M).